A 100-amino-acid chain; its full sequence is UPF0251 protein VV2_0946 (100 aa).

It belongs to the UPF0251 family.

The protein is UPF0251 protein VV2_0946 of Vibrio vulnificus (strain CMCP6).